The chain runs to 406 residues: Sensor histidine kinase YxjM (406 aa).

The Cytoplasmic segment spans residues 1–13; that stretch reads MNGQTPARHYYKK. The helical transmembrane segment at 14–34 threads the bilayer; that stretch reads LVPSLILILNCIQFLSHPTKA. Residues 35–36 are Extracellular-facing; the sequence is DP. Residues 37–57 form a helical membrane-spanning segment; it reads ILLAFVFAVYLAFIWIIPYVA. Residue Ser58 is a topological domain, cytoplasmic. The next 2 helical transmembrane spans lie at 59-79 and 80-100; these read TAVS…FWAV and SGQE…YAAF. Position 101 (Arg101) is a topological domain, cytoplasmic. Residues 102 to 122 form a helical membrane-spanning segment; the sequence is LPSRLSLIFTACLIGGNILLL. Over 123–125 the chain is Extracellular; that stretch reads SSQ. A helical membrane pass occupies residues 126–146; the sequence is GGSLNTIISNISIMLGLYVLF. Residues 147–406 are Cytoplasmic-facing; the sequence is SSMRFRREAR…TNKEQKDEQR (260 aa). The 188-residue stretch at 209–396 folds into the Histidine kinase domain; sequence DIHDSIGHEL…KIELSLPLMT (188 aa). His211 carries the phosphohistidine; by autocatalysis modification.

It is found in the cell membrane. The enzyme catalyses ATP + protein L-histidine = ADP + protein N-phospho-L-histidine.. Probable member of the two-component regulatory system YxjM/YxjL. May activate YxjL by phosphorylation. The sequence is that of Sensor histidine kinase YxjM (yxjM) from Bacillus subtilis (strain 168).